Consider the following 226-residue polypeptide: Phosphoglycolate phosphatase (226 aa).

The active-site Nucleophile is aspartate 10. 3 residues coordinate Mg(2+): aspartate 10, aspartate 12, and aspartate 175.

It belongs to the HAD-like hydrolase superfamily. CbbY/CbbZ/Gph/YieH family. The cofactor is Mg(2+).

The catalysed reaction is 2-phosphoglycolate + H2O = glycolate + phosphate. The protein operates within organic acid metabolism; glycolate biosynthesis; glycolate from 2-phosphoglycolate: step 1/1. In terms of biological role, specifically catalyzes the dephosphorylation of 2-phosphoglycolate. Is involved in the dissimilation of the intracellular 2-phosphoglycolate formed during the DNA repair of 3'-phosphoglycolate ends, a major class of DNA lesions induced by oxidative stress. In Vibrio cholerae serotype O1 (strain ATCC 39315 / El Tor Inaba N16961), this protein is Phosphoglycolate phosphatase.